The sequence spans 204 residues: High frequency lysogenization protein HflD homolog (204 aa).

This sequence belongs to the HflD family.

It is found in the cytoplasm. The protein localises to the cell inner membrane. The chain is High frequency lysogenization protein HflD homolog from Xanthomonas campestris pv. campestris (strain ATCC 33913 / DSM 3586 / NCPPB 528 / LMG 568 / P 25).